The sequence spans 892 residues: Alanine--tRNA ligase (892 aa).

Zn(2+) contacts are provided by histidine 580, histidine 584, cysteine 682, and histidine 686.

It belongs to the class-II aminoacyl-tRNA synthetase family. Zn(2+) is required as a cofactor.

The protein localises to the cytoplasm. The catalysed reaction is tRNA(Ala) + L-alanine + ATP = L-alanyl-tRNA(Ala) + AMP + diphosphate. Catalyzes the attachment of alanine to tRNA(Ala) in a two-step reaction: alanine is first activated by ATP to form Ala-AMP and then transferred to the acceptor end of tRNA(Ala). Also edits incorrectly charged Ser-tRNA(Ala) and Gly-tRNA(Ala) via its editing domain. In Salinispora tropica (strain ATCC BAA-916 / DSM 44818 / JCM 13857 / NBRC 105044 / CNB-440), this protein is Alanine--tRNA ligase.